A 193-amino-acid chain; its full sequence is Ion-translocating oxidoreductase complex subunit B (193 aa).

Residues 1–26 (MSTMLIAVILLTLLALFFGVLLGFAA) are hydrophobic. Residues 32-90 (EGNPIVDELEAILPQTQCGQCGYPGCRPYAEAIANGDKVNKCPPGGTATMEKLASLMGV) enclose the 4Fe-4S domain. Positions 49, 52, 57, 73, 114, 117, 120, 124, 144, 147, 150, and 154 each coordinate [4Fe-4S] cluster. 4Fe-4S ferredoxin-type domains lie at 105–134 (KVAY…GAGK) and 136–164 (MHTV…MIPV).

It belongs to the 4Fe4S bacterial-type ferredoxin family. RnfB subfamily. As to quaternary structure, the complex is composed of six subunits: RnfA, RnfB, RnfC, RnfD, RnfE and RnfG. The cofactor is [4Fe-4S] cluster.

The protein localises to the cell inner membrane. Part of a membrane-bound complex that couples electron transfer with translocation of ions across the membrane. In Shewanella sp. (strain MR-7), this protein is Ion-translocating oxidoreductase complex subunit B.